Reading from the N-terminus, the 540-residue chain is Pentatricopeptide repeat-containing protein At1g80880, mitochondrial (540 aa).

The N-terminal 87 residues, 1–87 (MAAIVAIGRK…ETFDINLTAL (87 aa)), are a transit peptide targeting the mitochondrion. PPR repeat units lie at residues 154-184 (DQKSCDLMIWVLGNHQKFNIAWCLIRDMFNV), 188-222 (TRKAMFLMMDRYAAANDTSQAIRTFDIMDKFKHTP), 223-253 (YDEAFQGLLCALCRHGHIEKAEEFMLASKKL), 257-292 (DVEGFNVILNGWCNIWTDVTEAKRIWREMGNYCITP), 293-327 (NKDSYSHMISCFSKVGNLFDSLRLYDEMKKRGLAP), 328-362 (GIEVYNSLVYVLTREDCFDEAMKLMKKLNEEGLKP), 363-397 (DSVTYNSMIRPLCEAGKLDVARNVLATMISENLSP), 402-428 (FHAFLEAVNFEKTLEVLGQMKISDLGP), 429-463 (TEETFLLILGKLFKGKQPENALKIWAEMDRFEIVA), and 464-498 (NPALYLATIQGLLSCGWLEKAREIYSEMKSKGFVG). The tract at residues 514–540 (VRKSKRMNLQKVGSQEGYKGQRSVDRK) is disordered.

The protein belongs to the PPR family. P subfamily.

Its subcellular location is the mitochondrion. The chain is Pentatricopeptide repeat-containing protein At1g80880, mitochondrial from Arabidopsis thaliana (Mouse-ear cress).